The following is a 192-amino-acid chain: Ion-translocating oxidoreductase complex subunit B (192 aa).

The tract at residues 1–26 is hydrophobic; the sequence is MNAFWIAVAAVSLLGLAFGAILGYAS. One can recognise a 4Fe-4S domain in the interval 32 to 91; that stretch reads EDDPVVEKIDEILPQSQCGQCGYPGCRPYAEAISCNGEKINRCAPGGEAVMLKIAELLNV. Positions 49, 52, 57, 74, 117, 120, 123, 127, 147, 150, 153, and 157 each coordinate [4Fe-4S] cluster. 2 consecutive 4Fe-4S ferredoxin-type domains span residues 108-137 and 138-167; these read MVAVIDENNCIGCTKCIQACPVDAIVGATR and AMHTVMSDLCTGCNLCVDPCPTHCISLQPV.

This sequence belongs to the 4Fe4S bacterial-type ferredoxin family. RnfB subfamily. In terms of assembly, the complex is composed of six subunits: RsxA, RsxB, RsxC, RsxD, RsxE and RsxG. It depends on [4Fe-4S] cluster as a cofactor.

It is found in the cell inner membrane. Part of a membrane-bound complex that couples electron transfer with translocation of ions across the membrane. Required to maintain the reduced state of SoxR. The protein is Ion-translocating oxidoreductase complex subunit B of Escherichia coli O6:H1 (strain CFT073 / ATCC 700928 / UPEC).